We begin with the raw amino-acid sequence, 474 residues long: Ribulose bisphosphate carboxylase large chain (474 aa).

Substrate is bound by residues Asn122 and Thr172. Lys174 functions as the Proton acceptor in the catalytic mechanism. Lys176 is a binding site for substrate. Mg(2+) contacts are provided by Lys200, Asp202, and Glu203. Lys200 is modified (N6-carboxylysine). The Proton acceptor role is filled by His293. Arg294, His326, and Ser378 together coordinate substrate.

This sequence belongs to the RuBisCO large chain family. Type I subfamily. In terms of assembly, heterohexadecamer of 8 large chains and 8 small chains; disulfide-linked. The disulfide link is formed within the large subunit homodimers. It depends on Mg(2+) as a cofactor. In terms of processing, the disulfide bond which can form in the large chain dimeric partners within the hexadecamer appears to be associated with oxidative stress and protein turnover.

The protein localises to the carboxysome. The catalysed reaction is 2 (2R)-3-phosphoglycerate + 2 H(+) = D-ribulose 1,5-bisphosphate + CO2 + H2O. It carries out the reaction D-ribulose 1,5-bisphosphate + O2 = 2-phosphoglycolate + (2R)-3-phosphoglycerate + 2 H(+). Its function is as follows. RuBisCO catalyzes two reactions: the carboxylation of D-ribulose 1,5-bisphosphate, the primary event in carbon dioxide fixation, as well as the oxidative fragmentation of the pentose substrate in the photorespiration process. Both reactions occur simultaneously and in competition at the same active site. In Gloeobacter violaceus (strain ATCC 29082 / PCC 7421), this protein is Ribulose bisphosphate carboxylase large chain.